We begin with the raw amino-acid sequence, 337 residues long: Follistatin (337 aa).

The N-terminal stretch at 1–22 (PGGVCLLLLLLCQFMEDRSAQA) is a signal peptide. The TB domain maps to 23–96 (GNCWLRQAKN…TCENVDCGPG (74 aa)). 18 disulfide bridges follow: Cys-25/Cys-48, Cys-35/Cys-81, Cys-49/Cys-84, Cys-88/Cys-99, Cys-93/Cys-109, Cys-111/Cys-143, Cys-115/Cys-136, Cys-125/Cys-157, Cys-161/Cys-172, Cys-166/Cys-182, Cys-185/Cys-218, Cys-189/Cys-211, Cys-200/Cys-232, Cys-238/Cys-249, Cys-243/Cys-260, Cys-263/Cys-295, Cys-267/Cys-288, and Cys-277/Cys-309. Positions 87–110 (TCENVDCGPGKKCRMNKKNKPRCV) constitute a Follistatin-like 1 domain. Residues 105-159 (NKPRCVCAPDCSNITWKGPVCGLDGKTYRNECALLKARCKEQPELEVQYQGKCKK) form the Kazal-like 1 domain. Asn-117 carries N-linked (GlcNAc...) asparagine glycosylation. The Follistatin-like 2 domain occupies 160–183 (TCRDVFCPGSSTCVVDQTNNAYCV). A Kazal-like 2 domain is found at 179–234 (NAYCVTCNRICPEPTSSEQYLCGNDGVTYPSACHLRKATCLLGRSIGLAYEGKCIK). The 25-residue stretch at 237–261 (SCEDIQCTGGKKCLWDFKVGRGRCS) folds into the Follistatin-like 3 domain. The Kazal-like 3 domain maps to 254–311 (KVGRGRCSLCGELCPESKSEEPVCASDNATYASECAMKEAACSSGVLLEVKHSGSCNS). A glycan (N-linked (GlcNAc...) asparagine) is linked at Asn-281. The interval 309–337 (CNSISEDTEDEEEDEDQDYSFPISSILEW) is disordered. Acidic residues predominate over residues 314–326 (EDTEDEEEDEDQD).

Monomer.

The protein localises to the secreted. In terms of biological role, binds directly to activin and functions as an activin antagonist. Specific inhibitor of the biosynthesis and secretion of pituitary follicle stimulating hormone (FSH). The sequence is that of Follistatin from Ovis aries (Sheep).